Here is a 487-residue protein sequence, read N- to C-terminus: MAMMRTSPRDSISNLPDEILGKILSLLPTKVAASTSVLSKRWRNLLGLVDNLCFDESMVVYPNEEEETSGSLRFCDFVDKTFALLSNSHIKKFSLSRVYKYNDDVDGMVRRWIRTVMERGLLEIHLHATPMSFVAIETKLLTSNTLVKLTLSARCFVEVERVFFPALKSLSLFSILGDYTNYIRLIDGCPVLEELYMRDGDYPFLRLTCGTNVESASLKRLVIFTHNPNEMIWHELIYFEAPSLVYLDYSSYVSAKYDVVDFDLLVEARLSLRLWVSTNDYDYSDDDDDDDDDDDDDDDGDYYIVEPKAPIFGDVTELLAAIRNITTLHLSPDSLEVFHFCCKSMPVFNNLLNLSIESNKDKGWQVMPLLLKSCPNLHTLVIKGLVHRVTSRCGDACACIPKKQRKIVQKEEALCCLRTCQVKVLQISEYGGYFQELKQMRHFLGKLECLETVKVGVHAENNNNSEFLRANVLTLPRVSAKCNVHFI.

The region spanning 9 to 57 (RDSISNLPDEILGKILSLLPTKVAASTSVLSKRWRNLLGLVDNLCFDES) is the F-box domain. 6 LRR repeats span residues 71–97 (SLRFCDFVDKTFALLSNSHIKKFSLSR), 125–153 (HLHATPMSFVAIETKLLTSNTLVKLTLSA), 174–199 (SILGDYTNYIRLIDGCPVLEELYMRD), 225–251 (THNPNEMIWHELIYFEAPSLVYLDYSS), 327–358 (TLHLSPDSLEVFHFCCKSMPVFNNLLNLSIES), and 359–384 (NKDKGWQVMPLLLKSCPNLHTLVIKG).

The protein is F-box/LRR-repeat protein At1g48400 of Arabidopsis thaliana (Mouse-ear cress).